The chain runs to 101 residues: uncharacterized protein (101 aa).

The first 23 residues, 1–23 (MERRTGVVLIIFVTFCEAMMARA), serve as a signal peptide directing secretion. A helical membrane pass occupies residues 38 to 58 (FLLFIIHTSCTMVAFIIGNLA).

The protein resides in the host membrane. This is an uncharacterized protein from Cryphonectria parasitica (Chestnut blight fungus).